Here is a 133-residue protein sequence, read N- to C-terminus: Hexon-interlacing protein (133 aa).

The stretch at 97 to 127 (REEDALSVVLTRMEELSQQLQDLFAKVALLN) forms a coiled coil.

This sequence belongs to the adenoviridae hexon-interlacing protein family. Homotrimer. Interacts with hexon protein; this interaction tethers the hexons together. Self-interacts with adjacent proteins. Interacts with kinesin light chain KLC1; this interaction leads to capsid disruption at the nuclear pore complex during virus entry into host cell.

It is found in the virion. The protein localises to the host nucleus. In terms of biological role, structural component of the virion that acts as a cement protein on the capsid exterior and forms triskelion structures consisting of three molecules that stabilize three hexon trimers at the center of each icosahedral facet and fixes the peripentonal hexons. Dispensable for assembly. During virus entry, recruits the anterograde motor kinesin-1 to the capsid docked at the nuclear pore complex thereby subjecting the docked capsid to a pulling force. The resulting tension leads to capsid disruption, dispersion of capsid fragments toward cell periphery and eventually viral DNA entry into the host nucleus. This Homo sapiens (Human) protein is Hexon-interlacing protein.